A 144-amino-acid chain; its full sequence is Large ribosomal subunit protein uL11 (144 aa).

This sequence belongs to the universal ribosomal protein uL11 family. Part of the ribosomal stalk of the 50S ribosomal subunit. Interacts with L10 and the large rRNA to form the base of the stalk. L10 forms an elongated spine to which L12 dimers bind in a sequential fashion forming a multimeric L10(L12)X complex. In terms of processing, one or more lysine residues are methylated.

Forms part of the ribosomal stalk which helps the ribosome interact with GTP-bound translation factors. The polypeptide is Large ribosomal subunit protein uL11 (Rickettsia bellii (strain OSU 85-389)).